Reading from the N-terminus, the 628-residue chain is Phosphomethylpyrimidine synthase (628 aa).

Substrate-binding positions include Asn-229, Met-258, Tyr-287, His-323, 343–345 (SRG), 384–387 (DGLR), and Glu-423. His-427 is a Zn(2+) binding site. Residue Tyr-450 coordinates substrate. His-491 contacts Zn(2+). [4Fe-4S] cluster is bound by residues Cys-571, Cys-574, and Cys-579.

It belongs to the ThiC family. In terms of assembly, homodimer. It depends on [4Fe-4S] cluster as a cofactor.

The catalysed reaction is 5-amino-1-(5-phospho-beta-D-ribosyl)imidazole + S-adenosyl-L-methionine = 4-amino-2-methyl-5-(phosphooxymethyl)pyrimidine + CO + 5'-deoxyadenosine + formate + L-methionine + 3 H(+). Its pathway is cofactor biosynthesis; thiamine diphosphate biosynthesis. Its function is as follows. Catalyzes the synthesis of the hydroxymethylpyrimidine phosphate (HMP-P) moiety of thiamine from aminoimidazole ribotide (AIR) in a radical S-adenosyl-L-methionine (SAM)-dependent reaction. The polypeptide is Phosphomethylpyrimidine synthase (Variovorax paradoxus (strain S110)).